The following is a 219-amino-acid chain: Ribose-5-phosphate isomerase A (219 aa).

Substrate-binding positions include 28–31 (TGST), 81–84 (DGAD), and 94–97 (KGGG). Glu103 (proton acceptor) is an active-site residue. Substrate is bound at residue Lys121.

The protein belongs to the ribose 5-phosphate isomerase family. Homodimer.

The enzyme catalyses aldehydo-D-ribose 5-phosphate = D-ribulose 5-phosphate. It functions in the pathway carbohydrate degradation; pentose phosphate pathway; D-ribose 5-phosphate from D-ribulose 5-phosphate (non-oxidative stage): step 1/1. Its function is as follows. Catalyzes the reversible conversion of ribose-5-phosphate to ribulose 5-phosphate. The chain is Ribose-5-phosphate isomerase A from Shewanella loihica (strain ATCC BAA-1088 / PV-4).